A 378-amino-acid polypeptide reads, in one-letter code: GDP-mannose-dependent alpha-mannosyltransferase (378 aa).

Belongs to the glycosyltransferase group 1 family. Glycosyltransferase 4 subfamily.

It functions in the pathway phospholipid metabolism; phosphatidylinositol metabolism. Catalyzes the addition of a mannose residue from GDP-D-mannose to GlcAGroAc2 to generate 1,2-di-O-C16/C18:1-(alpha-D-mannopyranosyl)-(1-4)-(alpha-D-glucopyranosyluronic acid)-(1-3)-glycerol(ManGlcAGroAc2). This Mycobacterium tuberculosis (strain CDC 1551 / Oshkosh) protein is GDP-mannose-dependent alpha-mannosyltransferase (mgtA).